Here is a 706-residue protein sequence, read N- to C-terminus: Fatty acid oxidation complex subunit alpha (706 aa).

Residues 1-188 (MEKTFNLTRR…KMGLVNDVVP (188 aa)) are enoyl-CoA hydratase. The 3-hydroxyacyl-CoA dehydrogenase stretch occupies residues 308 to 706 (RKVKKAVILG…TMARENVSFF (399 aa)).

This sequence in the N-terminal section; belongs to the enoyl-CoA hydratase/isomerase family. It in the central section; belongs to the 3-hydroxyacyl-CoA dehydrogenase family. As to quaternary structure, heterotetramer of two alpha chains (FadJ) and two beta chains (FadI).

Its subcellular location is the cytoplasm. The enzyme catalyses a (3S)-3-hydroxyacyl-CoA = a (2E)-enoyl-CoA + H2O. It carries out the reaction a 4-saturated-(3S)-3-hydroxyacyl-CoA = a (3E)-enoyl-CoA + H2O. It catalyses the reaction a (3S)-3-hydroxyacyl-CoA + NAD(+) = a 3-oxoacyl-CoA + NADH + H(+). The catalysed reaction is (3S)-3-hydroxybutanoyl-CoA = (3R)-3-hydroxybutanoyl-CoA. Its pathway is lipid metabolism; fatty acid beta-oxidation. Catalyzes the formation of a hydroxyacyl-CoA by addition of water on enoyl-CoA. Also exhibits 3-hydroxyacyl-CoA epimerase and 3-hydroxyacyl-CoA dehydrogenase activities. This Shewanella putrefaciens (strain CN-32 / ATCC BAA-453) protein is Fatty acid oxidation complex subunit alpha.